A 487-amino-acid chain; its full sequence is Glycogen synthase 2 (487 aa).

Lys-12 contacts ADP-alpha-D-glucose.

Belongs to the glycosyltransferase 1 family. Bacterial/plant glycogen synthase subfamily.

It catalyses the reaction [(1-&gt;4)-alpha-D-glucosyl](n) + ADP-alpha-D-glucose = [(1-&gt;4)-alpha-D-glucosyl](n+1) + ADP + H(+). Its pathway is glycan biosynthesis; glycogen biosynthesis. Synthesizes alpha-1,4-glucan chains using ADP-glucose. This chain is Glycogen synthase 2, found in Methylococcus capsulatus (strain ATCC 33009 / NCIMB 11132 / Bath).